Reading from the N-terminus, the 364-residue chain is Protein IncC (364 aa).

3 stretches are compositionally biased toward basic and acidic residues: residues 1-10, 26-42, and 89-100; these read MGVIHEETAY, ADHR…EATG, and HRPEVGSGRQEK. Disordered regions lie at residues 1-63 and 75-102; these read MGVI…ASRV and VRAG…EKTG.

It belongs to the ParA family.

This is one of the proteins encoded by the trfB operon; it is involved in plasmid maintenance and replication. The polypeptide is Protein IncC (incC) (Escherichia coli).